The sequence spans 72 residues: Translation initiation factor IF-1 (72 aa).

In terms of domain architecture, S1-like spans 1–72 (MSKQSSIEQD…TKGRIVFRYK (72 aa)).

Belongs to the IF-1 family. As to quaternary structure, component of the 30S ribosomal translation pre-initiation complex which assembles on the 30S ribosome in the order IF-2 and IF-3, IF-1 and N-formylmethionyl-tRNA(fMet); mRNA recruitment can occur at any time during PIC assembly.

The protein localises to the cytoplasm. One of the essential components for the initiation of protein synthesis. Stabilizes the binding of IF-2 and IF-3 on the 30S subunit to which N-formylmethionyl-tRNA(fMet) subsequently binds. Helps modulate mRNA selection, yielding the 30S pre-initiation complex (PIC). Upon addition of the 50S ribosomal subunit IF-1, IF-2 and IF-3 are released leaving the mature 70S translation initiation complex. This chain is Translation initiation factor IF-1, found in Cytophaga hutchinsonii (strain ATCC 33406 / DSM 1761 / CIP 103989 / NBRC 15051 / NCIMB 9469 / D465).